Consider the following 950-residue polypeptide: Valine--tRNA ligase, mitochondrial (950 aa).

Residues 1 to 90 (MFHFQRSFSS…ITIQDALARF (90 aa)) constitute a mitochondrion transit peptide. The 'HIGH' region signature appears at 67 to 77 (PNITGKLHIGH). Residues 556–560 (KMSKS) carry the 'KMSKS' region motif. ATP is bound at residue Lys-559.

The protein belongs to the class-I aminoacyl-tRNA synthetase family.

The protein localises to the mitochondrion. The catalysed reaction is tRNA(Val) + L-valine + ATP = L-valyl-tRNA(Val) + AMP + diphosphate. The protein is Valine--tRNA ligase, mitochondrial (vas1) of Schizosaccharomyces pombe (strain 972 / ATCC 24843) (Fission yeast).